The following is a 152-amino-acid chain: Mid1-interacting protein 1A (152 aa).

Residues 87-105 show a composition bias toward basic and acidic residues; that stretch reads SEDQRRKKDTSASEPVRTE. Residues 87-109 form a disordered region; the sequence is SEDQRRKKDTSASEPVRTEEESD.

Belongs to the SPOT14 family. Expressed for a short period in the cells that will produce the enveloping layer (EVL).

It is found in the nucleus. Its subcellular location is the cytoplasm. The protein localises to the cytoskeleton. In terms of biological role, involved in stabilization of microtubules. May play a role in the regulation of lipogenesis. The polypeptide is Mid1-interacting protein 1A (mid1ip1a) (Danio rerio (Zebrafish)).